The sequence spans 381 residues: Peptidoglycan glycosyltransferase MrdB (381 aa).

10 helical membrane-spanning segments follow: residues Phe11–Phe31, Lys40–Phe60, Trp66–Tyr86, Phe99–Ala119, Tyr132–Leu152, Asp156–Leu176, Val180–His200, Phe263–Phe283, Ile297–Thr317, and Leu328–Leu348.

Belongs to the SEDS family. MrdB/RodA subfamily.

Its subcellular location is the cell inner membrane. The catalysed reaction is [GlcNAc-(1-&gt;4)-Mur2Ac(oyl-L-Ala-gamma-D-Glu-L-Lys-D-Ala-D-Ala)](n)-di-trans,octa-cis-undecaprenyl diphosphate + beta-D-GlcNAc-(1-&gt;4)-Mur2Ac(oyl-L-Ala-gamma-D-Glu-L-Lys-D-Ala-D-Ala)-di-trans,octa-cis-undecaprenyl diphosphate = [GlcNAc-(1-&gt;4)-Mur2Ac(oyl-L-Ala-gamma-D-Glu-L-Lys-D-Ala-D-Ala)](n+1)-di-trans,octa-cis-undecaprenyl diphosphate + di-trans,octa-cis-undecaprenyl diphosphate + H(+). Its pathway is cell wall biogenesis; peptidoglycan biosynthesis. Peptidoglycan polymerase that is essential for cell wall elongation. The protein is Peptidoglycan glycosyltransferase MrdB of Helicobacter pylori (strain ATCC 700392 / 26695) (Campylobacter pylori).